The chain runs to 483 residues: Altronate oxidoreductase (483 aa).

An NAD(+)-binding site is contributed by 18 to 29 (IIQFGEGNFLRA).

Belongs to the mannitol dehydrogenase family. UxaB subfamily.

It catalyses the reaction D-altronate + NAD(+) = keto-D-tagaturonate + NADH + H(+). It participates in carbohydrate metabolism; pentose and glucuronate interconversion. This is Altronate oxidoreductase (uxaB) from Escherichia coli O157:H7.